The primary structure comprises 456 residues: UDP-N-acetylmuramoylalanine--D-glutamate ligase (456 aa).

ATP is bound at residue 113-119; the sequence is GTNGKTT.

This sequence belongs to the MurCDEF family.

The protein localises to the cytoplasm. The enzyme catalyses UDP-N-acetyl-alpha-D-muramoyl-L-alanine + D-glutamate + ATP = UDP-N-acetyl-alpha-D-muramoyl-L-alanyl-D-glutamate + ADP + phosphate + H(+). It participates in cell wall biogenesis; peptidoglycan biosynthesis. Cell wall formation. Catalyzes the addition of glutamate to the nucleotide precursor UDP-N-acetylmuramoyl-L-alanine (UMA). This is UDP-N-acetylmuramoylalanine--D-glutamate ligase from Rippkaea orientalis (strain PCC 8801 / RF-1) (Cyanothece sp. (strain PCC 8801)).